Consider the following 197-residue polypeptide: Adrenodoxin-like protein 2, mitochondrial (197 aa).

The N-terminal 74 residues, 1–74 (MVFHRLSRLG…TSFSTTSEKG (74 aa)), are a transit peptide targeting the mitochondrion. The 104-residue stretch at 81–184 (INVTFVDKDG…GVRLAIPSAT (104 aa)) folds into the 2Fe-2S ferredoxin-type domain. Residues Cys118, Cys124, Cys127, and Cys165 each contribute to the [2Fe-2S] cluster site.

Belongs to the adrenodoxin/putidaredoxin family. [2Fe-2S] cluster serves as cofactor.

It localises to the mitochondrion. Functionally, associates with the adrenodoxin reductase MFDR to form an efficient low potential electron transfer chain that is able to reduce cytochrome C. In Arabidopsis thaliana (Mouse-ear cress), this protein is Adrenodoxin-like protein 2, mitochondrial.